The chain runs to 633 residues: Threonine--tRNA ligase (633 aa).

The 61-residue stretch at 1 to 61 folds into the TGS domain; it reads MINIYFNNNL…TENCTFEVIT (61 aa). The catalytic stretch occupies residues 242–533; that stretch reads DHRKIGKELE…LIEHHSGKFP (292 aa). 3 residues coordinate Zn(2+): C333, H384, and H510.

It belongs to the class-II aminoacyl-tRNA synthetase family. In terms of assembly, homodimer. The cofactor is Zn(2+).

It is found in the cytoplasm. It carries out the reaction tRNA(Thr) + L-threonine + ATP = L-threonyl-tRNA(Thr) + AMP + diphosphate + H(+). In terms of biological role, catalyzes the attachment of threonine to tRNA(Thr) in a two-step reaction: L-threonine is first activated by ATP to form Thr-AMP and then transferred to the acceptor end of tRNA(Thr). Also edits incorrectly charged L-seryl-tRNA(Thr). In Ehrlichia canis (strain Jake), this protein is Threonine--tRNA ligase.